A 744-amino-acid polypeptide reads, in one-letter code: Polyribonucleotide nucleotidyltransferase (744 aa).

The Mg(2+) site is built by aspartate 487 and aspartate 493. The KH domain occupies 554 to 613 (PSTTTLKVDKDKIRDIIGPGGKVIKEICETSGAKIDISDDGTVSIYASDKDKLKVALDKV). Positions 623–691 (GEVFNGTVMK…NKGKAKLTIK (69 aa)) constitute an S1 motif domain. The segment at 691 to 744 (KNAEKDKSSANPKPKNSPKEHQEPEKRDNGKKRAWNEDNNAETTEVVTERKYFS) is disordered. Residues 707–718 (SPKEHQEPEKRD) show a composition bias toward basic and acidic residues. Polar residues predominate over residues 727 to 736 (EDNNAETTEV).

Belongs to the polyribonucleotide nucleotidyltransferase family. Mg(2+) is required as a cofactor.

It is found in the cytoplasm. The catalysed reaction is RNA(n+1) + phosphate = RNA(n) + a ribonucleoside 5'-diphosphate. Involved in mRNA degradation. Catalyzes the phosphorolysis of single-stranded polyribonucleotides processively in the 3'- to 5'-direction. The polypeptide is Polyribonucleotide nucleotidyltransferase (Rickettsia bellii (strain OSU 85-389)).